Consider the following 268-residue polypeptide: Hemolysin C (268 aa).

CBS domains are found at residues 52–111 (MVPR…NFSL) and 114–171 (ILHK…IRDE).

The protein belongs to the UPF0053 family.

Bacterial hemolysins are exotoxins that attack blood cell membranes and cause cell rupture by mechanisms not clearly defined. The protein is Hemolysin C (tlyC) of Brachyspira hyodysenteriae (Treponema hyodysenteriae).